Consider the following 346-residue polypeptide: Histone PARylation factor 1 (346 aa).

Met-1 carries the post-translational modification N-acetylmethionine. Residues 1–10 show a composition bias toward basic residues; sequence MVGGGAKRRL. A disordered region spans residues 1 to 29; sequence MVGGGAKRRLRGEGPQCEKPVDMKKSKSC. At Lys-19 the chain carries N6-acetyllysine. The span at 19–29 shows a compositional bias: basic and acidic residues; sequence KPVDMKKSKSC. Residue Ser-97 is modified to ADP-ribosylserine. N6-acetyllysine occurs at positions 186 and 233. PolyADP-ribosyl aspartic acid is present on Asp-235. The residue at position 238 (Tyr-238) is an ADP-ribosyltyrosine. Residue Glu-240 is modified to PolyADP-ribosyl glutamic acid. Residues 242–346 are interaction with PARP1; it reads PETDASLRRI…SQDDVDQLAA (105 aa). The Proton donor role is filled by Glu-284.

Belongs to the HPF1 family. In terms of assembly, interacts with PARP1 (via the PARP catalytic domain). Interacts with PARP2 (via the PARP catalytic domain). Interacts with core nucleosomes in a PARP1- and PARP2-dependent manner.

The protein resides in the chromosome. The protein localises to the nucleus. Functionally, cofactor for serine ADP-ribosylation that confers serine specificity on PARP1 and PARP2 and plays a key role in DNA damage response. Initiates the repair of double-strand DNA breaks: recruited to DNA damage sites by PARP1 and PARP2 and switches the amino acid specificity of PARP1 and PARP2 from aspartate or glutamate to serine residues, licensing serine ADP-ribosylation of target proteins. Serine ADP-ribosylation of target proteins, such as histones, promotes decompaction of chromatin and the recruitment of repair factors leading to the reparation of DNA strand breaks. Serine ADP-ribosylation of proteins constitutes the primary form of ADP-ribosylation of proteins in response to DNA damage. HPF1 acts by completing the active site of PARP1 and PARP2: forms a composite active site composed of residues from HPF1 and PARP1 or PARP2. While HPF1 promotes the initiation of serine ADP-ribosylation, it restricts the polymerase activity of PARP1 and PARP2 in order to limit the length of poly-ADP-ribose chains. HPF1 also promotes tyrosine ADP-ribosylation, probably by conferring tyrosine specificity on PARP1. This is Histone PARylation factor 1 from Bos taurus (Bovine).